Here is a 240-residue protein sequence, read N- to C-terminus: Uridylate kinase (240 aa).

Residue 12–15 (KLSG) participates in ATP binding. An involved in allosteric activation by GTP region spans residues 20-25 (GEKGFG). Residue Gly-54 coordinates UMP. Residues Gly-55 and Arg-59 each coordinate ATP. UMP contacts are provided by residues Asp-74 and 135–142 (TGSPYFST). ATP is bound by residues Asn-163, Tyr-169, and Asp-172.

It belongs to the UMP kinase family. In terms of assembly, homohexamer.

The protein resides in the cytoplasm. The enzyme catalyses UMP + ATP = UDP + ADP. It participates in pyrimidine metabolism; CTP biosynthesis via de novo pathway; UDP from UMP (UMPK route): step 1/1. With respect to regulation, allosterically activated by GTP. Inhibited by UTP. Catalyzes the reversible phosphorylation of UMP to UDP. The protein is Uridylate kinase of Lactiplantibacillus plantarum (strain ATCC BAA-793 / NCIMB 8826 / WCFS1) (Lactobacillus plantarum).